Here is a 120-residue protein sequence, read N- to C-terminus: MFLLYEYDIFWAFLIISSAIPILAFLISGVLAPIRKGPEKLSSYESGIEPMGDAWLQFRIRYYMFALVFVVFDVETVFLYPWAMSFDVLGVPVFIEAFIFVLILIVGSVYAWRKGALEWS.

Transmembrane regions (helical) follow at residues 9-29 (IFWAFLIISSAIPILAFLISG), 64-84 (MFALVFVVFDVETVFLYPWAM), and 88-108 (VLGVPVFIEAFIFVLILIVGS).

It belongs to the complex I subunit 3 family. In terms of assembly, NDH is composed of at least 16 different subunits, 5 of which are encoded in the nucleus.

It localises to the plastid. Its subcellular location is the chloroplast thylakoid membrane. It catalyses the reaction a plastoquinone + NADH + (n+1) H(+)(in) = a plastoquinol + NAD(+) + n H(+)(out). It carries out the reaction a plastoquinone + NADPH + (n+1) H(+)(in) = a plastoquinol + NADP(+) + n H(+)(out). In terms of biological role, NDH shuttles electrons from NAD(P)H:plastoquinone, via FMN and iron-sulfur (Fe-S) centers, to quinones in the photosynthetic chain and possibly in a chloroplast respiratory chain. The immediate electron acceptor for the enzyme in this species is believed to be plastoquinone. Couples the redox reaction to proton translocation, and thus conserves the redox energy in a proton gradient. This Gossypium hirsutum (Upland cotton) protein is NAD(P)H-quinone oxidoreductase subunit 3, chloroplastic.